The following is a 613-amino-acid chain: tRNA (uracil-5-)-methyltransferase homolog A (613 aa).

The tract at residues 1–46 is disordered; it reads MSEPAAEVPEPMEDCGQDASAVPSSAAPLCQKEEAGPGPAAGPGTQ. Residues 63-136 form the RRM domain; sequence FKLELQNVPR…CPLSVRLARP (74 aa). Residues 170–200 adopt a coiled-coil conformation; sequence YTEQLEQKRLECERVLQKLAKEIGNTNRALL. Phosphoserine is present on Ser-368. Gln-401, Glu-451, and Asp-500 together coordinate S-adenosyl-L-methionine. Residue Cys-528 is the Nucleophile of the active site. Glu-571 (proton acceptor) is an active-site residue.

It belongs to the class I-like SAM-binding methyltransferase superfamily. RNA M5U methyltransferase family. Widely expressed at low level. Expressed at higher level in proliferating cells.

It localises to the cytoplasm. It is found in the cytosol. It catalyses the reaction uridine(54) in tRNA + S-adenosyl-L-methionine = 5-methyluridine(54) in tRNA + S-adenosyl-L-homocysteine + H(+). The catalysed reaction is a uridine in mRNA + S-adenosyl-L-methionine = a 5-methyluridine in mRNA + S-adenosyl-L-homocysteine + H(+). Its function is as follows. S-adenosyl-L-methionine-dependent methyltransferase that catalyzes the formation of 5-methyl-uridine in tRNAs and some mRNAs. Mainly catalyzes the methylation of uridine at position 54 (m5U54) in cytosolic tRNAs. Also able to mediate the formation of 5-methyl-uridine in some mRNAs. This Mus musculus (Mouse) protein is tRNA (uracil-5-)-methyltransferase homolog A.